A 465-amino-acid polypeptide reads, in one-letter code: Soluble pyridine nucleotide transhydrogenase (465 aa).

36 to 45 (ERYDNVGGGC) provides a ligand contact to FAD.

It belongs to the class-I pyridine nucleotide-disulfide oxidoreductase family. FAD is required as a cofactor.

It is found in the cytoplasm. The enzyme catalyses NAD(+) + NADPH = NADH + NADP(+). Conversion of NADPH, generated by peripheral catabolic pathways, to NADH, which can enter the respiratory chain for energy generation. The sequence is that of Soluble pyridine nucleotide transhydrogenase from Sodalis glossinidius (strain morsitans).